The sequence spans 373 residues: StAR-related lipid transfer protein 7, mitochondrial (373 aa).

A mitochondrion-targeting transit peptide spans 1 to 61 (MFPRRPPATL…YSESSRCALL (61 aa)). Positions 89–114 (DEERIQEEELQRSINEMKRLEEMSNI) form a coiled coil. The START domain occupies 115-330 (FQSSGVENYP…LHMATLKAKN (216 aa)). 2 disordered regions span residues 118–141 (SGVE…KDKE) and 347–373 (SSEA…IEYA).

In terms of processing, proteolytically cleaved by PARL. Expressed in epithelial cells of airways, peripheral bronchioles and alveoli, as well as in the basal cell layer of the epidermis (at protein level).

It localises to the mitochondrion. Its function is as follows. May play a protective role in mucosal tissues by preventing exaggerated allergic responses. This chain is StAR-related lipid transfer protein 7, mitochondrial (Stard7), found in Mus musculus (Mouse).